Reading from the N-terminus, the 107-residue chain is Wound-induced proteinase inhibitor 1 (107 aa).

The signal sequence occupies residues methionine 1 to alanine 23. Positions arginine 24–glutamine 36 are excised as a propeptide.

Belongs to the protease inhibitor I13 (potato type I serine protease inhibitor) family. Heterogeneous tetramers of similar chains.

Inhibits both chymotrypsin and trypsin. This chain is Wound-induced proteinase inhibitor 1, found in Solanum tuberosum (Potato).